The primary structure comprises 300 residues: UDP-N-acetylenolpyruvoylglucosamine reductase (300 aa).

The FAD-binding PCMH-type domain occupies 28–193 (KTGGPADWLA…LDATFALKLG (166 aa)). The active site involves R172. S222 acts as the Proton donor in catalysis. E292 is a catalytic residue.

This sequence belongs to the MurB family. FAD serves as cofactor.

Its subcellular location is the cytoplasm. The enzyme catalyses UDP-N-acetyl-alpha-D-muramate + NADP(+) = UDP-N-acetyl-3-O-(1-carboxyvinyl)-alpha-D-glucosamine + NADPH + H(+). It functions in the pathway cell wall biogenesis; peptidoglycan biosynthesis. In terms of biological role, cell wall formation. In Limosilactobacillus fermentum (strain NBRC 3956 / LMG 18251) (Lactobacillus fermentum), this protein is UDP-N-acetylenolpyruvoylglucosamine reductase.